The chain runs to 1076 residues: Regulator of G-protein signaling protein-like (1076 aa).

The RGS domain maps to Asn645–Glu764. Polar residues predominate over residues Thr834–Ser852. The tract at residues Thr834–Asp854 is disordered. A helical transmembrane segment spans residues Val960–Trp982.

The protein localises to the membrane. This is Regulator of G-protein signaling protein-like (RGSL1) from Homo sapiens (Human).